A 225-amino-acid chain; its full sequence is Probable polyketide biosynthesis zinc-dependent hydrolase PksB (225 aa).

The Zn(2+) site is built by histidine 62, histidine 64, aspartate 66, histidine 67, histidine 123, aspartate 140, and histidine 181.

It belongs to the metallo-beta-lactamase superfamily. Zn(2+) serves as cofactor.

Its subcellular location is the cytoplasm. It functions in the pathway antibiotic biosynthesis; bacillaene biosynthesis. Functionally, probably involved in some intermediate steps for the synthesis of the antibiotic polyketide bacillaene which is involved in secondary metabolism. This is Probable polyketide biosynthesis zinc-dependent hydrolase PksB (pksB) from Bacillus subtilis (strain 168).